The chain runs to 513 residues: Aspartyl protease family protein 1 (513 aa).

The N-terminal stretch at 1–21 (MVWYSSCRILFLGLLILLASS) is a signal peptide. In terms of domain architecture, Peptidase A1 spans 104–445 (HYANVTVGTP…DREKLILGWK (342 aa)). Catalysis depends on residues aspartate 122 and aspartate 327. The disordered stretch occupies residues 452–488 (GETSARTLPSNRSSSSARPPASSFDPEATNIPSQRPN). The span at 455 to 474 (SARTLPSNRSSSSARPPASS) shows a compositional bias: low complexity. The GPI-anchor amidated serine moiety is linked to residue serine 484. The propeptide at 485-513 (QRPNTSTTSAAYSLSISLSLFFFSILAIL) is removed in mature form.

This sequence belongs to the peptidase A1 family.

It localises to the cell membrane. Functionally, aspartyl protease. Not able to cleave BAG6. This is Aspartyl protease family protein 1 from Arabidopsis thaliana (Mouse-ear cress).